Here is a 728-residue protein sequence, read N- to C-terminus: 1,4-alpha-glucan branching enzyme GlgB (728 aa).

D405 acts as the Nucleophile in catalysis. Catalysis depends on E458, which acts as the Proton donor.

The protein belongs to the glycosyl hydrolase 13 family. GlgB subfamily. Monomer.

It carries out the reaction Transfers a segment of a (1-&gt;4)-alpha-D-glucan chain to a primary hydroxy group in a similar glucan chain.. It functions in the pathway glycan biosynthesis; glycogen biosynthesis. Its function is as follows. Catalyzes the formation of the alpha-1,6-glucosidic linkages in glycogen by scission of a 1,4-alpha-linked oligosaccharide from growing alpha-1,4-glucan chains and the subsequent attachment of the oligosaccharide to the alpha-1,6 position. This chain is 1,4-alpha-glucan branching enzyme GlgB, found in Escherichia coli O6:K15:H31 (strain 536 / UPEC).